The sequence spans 353 residues: Photosystem II D2 protein (353 aa).

An N-acetylthreonine modification is found at Thr2. Position 2 is a phosphothreonine (Thr2). A helical transmembrane segment spans residues 41 to 61; it reads CAYFALGGWFTGTTFVTSWYT. Residue His118 coordinates chlorophyll a. The helical transmembrane segment at 125–141 threads the bilayer; sequence GFMLRQFELARSVQLRP. Residues Gln130 and Asn143 each coordinate pheophytin a. Residues 153–166 traverse the membrane as a helical segment; the sequence is VFVSVFLIYPLGQS. A chlorophyll a-binding site is contributed by His198. Residues 208–228 form a helical membrane-spanning segment; the sequence is AALLCAIHGATVENTLFEDGD. 2 residues coordinate a plastoquinone: His215 and Phe262. His215 lines the Fe cation pocket. A Fe cation-binding site is contributed by His269. A helical membrane pass occupies residues 279–295; that stretch reads GSWMSAIGVVGLALNLR.

The protein belongs to the reaction center PufL/M/PsbA/D family. PSII is composed of 1 copy each of membrane proteins PsbA, PsbB, PsbC, PsbD, PsbE, PsbF, PsbH, PsbI, PsbJ, PsbK, PsbL, PsbM, PsbT, PsbX, PsbY, PsbZ, Psb30/Ycf12, at least 3 peripheral proteins of the oxygen-evolving complex and a large number of cofactors. It forms dimeric complexes. The D1/D2 heterodimer binds P680, chlorophylls that are the primary electron donor of PSII, and subsequent electron acceptors. It shares a non-heme iron and each subunit binds pheophytin, quinone, additional chlorophylls, carotenoids and lipids. There is also a Cl(-1) ion associated with D1 and D2, which is required for oxygen evolution. The PSII complex binds additional chlorophylls, carotenoids and specific lipids. serves as cofactor.

It localises to the plastid. The protein resides in the chloroplast thylakoid membrane. The enzyme catalyses 2 a plastoquinone + 4 hnu + 2 H2O = 2 a plastoquinol + O2. Photosystem II (PSII) is a light-driven water:plastoquinone oxidoreductase that uses light energy to abstract electrons from H(2)O, generating O(2) and a proton gradient subsequently used for ATP formation. It consists of a core antenna complex that captures photons, and an electron transfer chain that converts photonic excitation into a charge separation. The D1/D2 (PsbA/PsbD) reaction center heterodimer binds P680, the primary electron donor of PSII as well as several subsequent electron acceptors. D2 is needed for assembly of a stable PSII complex. This chain is Photosystem II D2 protein, found in Pinus koraiensis (Korean pine).